The following is a 144-amino-acid chain: Maximins 3/H9 type 2 (144 aa).

The first 18 residues, 1–18 (MNFKYIVAVSFLIASAYA), serve as a signal peptide directing secretion. 2 consecutive propeptides follow at residues 19-43 (RSVQ…REIR) and 74-123 (TAEE…KEKR). At isoleucine 143 the chain carries Isoleucine amide.

The protein belongs to the bombinin family. In terms of tissue distribution, expressed by the skin glands.

The protein localises to the secreted. In terms of biological role, maximin-3 shows antibacterial activity against both Gram-positive and Gram-negative bacteria. It also shows antimicrobial activity against the fungus C.albicans, but not against A.flavus nor P.uticale. It has little hemolytic activity. It possess a significant cytotoxicity against tumor cell lines. It possess a significant anti-HIV activity. It shows high spermicidal activity. Functionally, maximin-H9 shows antimicrobial activity against bacteria and against the fungus C.albicans. Shows strong hemolytic activity. The chain is Maximins 3/H9 type 2 from Bombina maxima (Giant fire-bellied toad).